Reading from the N-terminus, the 957-residue chain is Glycine dehydrogenase (decarboxylating) (957 aa).

Lys-704 bears the N6-(pyridoxal phosphate)lysine mark.

It belongs to the GcvP family. The glycine cleavage system is composed of four proteins: P, T, L and H. Pyridoxal 5'-phosphate is required as a cofactor.

The catalysed reaction is N(6)-[(R)-lipoyl]-L-lysyl-[glycine-cleavage complex H protein] + glycine + H(+) = N(6)-[(R)-S(8)-aminomethyldihydrolipoyl]-L-lysyl-[glycine-cleavage complex H protein] + CO2. The glycine cleavage system catalyzes the degradation of glycine. The P protein binds the alpha-amino group of glycine through its pyridoxal phosphate cofactor; CO(2) is released and the remaining methylamine moiety is then transferred to the lipoamide cofactor of the H protein. The protein is Glycine dehydrogenase (decarboxylating) of Bordetella petrii (strain ATCC BAA-461 / DSM 12804 / CCUG 43448).